A 431-amino-acid chain; its full sequence is Saglin (431 aa).

Residues 1 to 39 form the signal peptide; the sequence is MSVRDYSGVQVISSRKHRSMSRLPTVLLLLASAAVLAAG. Asn95 carries N-linked (GlcNAc...) asparagine glycosylation. Positions 120 to 169 form a coiled coil; sequence LDDAQRQMEQEHRQYAATLEEQLHAAQQETQQEQEMKKALQKQLDALTDS.

In terms of assembly, homodimer. In terms of tissue distribution, female salivary gland (at protein level). Not detected in female carcass without salivary glands, midgut and hemolymph (at protein level). Probably not expressed in male tissues.

The protein resides in the secreted. Functionally, (Microbial infection) Facilitates efficient midgut colonization by Plasmodium berghei parasites. Promotes successful transmission of Plasmodium berghei at low infection densities. Its function is as follows. (Microbial infection) Facilitates efficient midgut colonization by Plasmodium falciparum. The polypeptide is Saglin (Anopheles coluzzii (African malaria mosquito)).